Reading from the N-terminus, the 187-residue chain is MNLQHHFLIAMPTLQDPLFKRSVVYICEHNADGAMGLIVNKPMENLTVEGILKKLKIAPTAREPDIRLDKPVFSGGPLAEDRGFILHSAQKTFTSSIRVSDNTVITTSRDVLETLGTAEQPDNVLVALGYCAWEKDQLEQELLENAWLTSPANSNILFHTPIAERWREAAKSIGVDIHNIASEAGHA.

Belongs to the UPF0301 (AlgH) family.

The protein is UPF0301 protein ETA_28320 of Erwinia tasmaniensis (strain DSM 17950 / CFBP 7177 / CIP 109463 / NCPPB 4357 / Et1/99).